A 561-amino-acid polypeptide reads, in one-letter code: DNA ligase B (561 aa).

The active-site N6-AMP-lysine intermediate is lysine 125.

The protein belongs to the NAD-dependent DNA ligase family. LigB subfamily.

It catalyses the reaction NAD(+) + (deoxyribonucleotide)n-3'-hydroxyl + 5'-phospho-(deoxyribonucleotide)m = (deoxyribonucleotide)n+m + AMP + beta-nicotinamide D-nucleotide.. Functionally, catalyzes the formation of phosphodiester linkages between 5'-phosphoryl and 3'-hydroxyl groups in double-stranded DNA using NAD as a coenzyme and as the energy source for the reaction. This Salmonella dublin (strain CT_02021853) protein is DNA ligase B.